A 356-amino-acid chain; its full sequence is UDP-N-acetylglucosamine--N-acetylmuramyl-(pentapeptide) pyrophosphoryl-undecaprenol N-acetylglucosamine transferase (356 aa).

UDP-N-acetyl-alpha-D-glucosamine contacts are provided by residues 11–13, N122, S186, and Q287; that span reads TGG.

The protein belongs to the glycosyltransferase 28 family. MurG subfamily.

The protein localises to the cell inner membrane. The catalysed reaction is di-trans,octa-cis-undecaprenyl diphospho-N-acetyl-alpha-D-muramoyl-L-alanyl-D-glutamyl-meso-2,6-diaminopimeloyl-D-alanyl-D-alanine + UDP-N-acetyl-alpha-D-glucosamine = di-trans,octa-cis-undecaprenyl diphospho-[N-acetyl-alpha-D-glucosaminyl-(1-&gt;4)]-N-acetyl-alpha-D-muramoyl-L-alanyl-D-glutamyl-meso-2,6-diaminopimeloyl-D-alanyl-D-alanine + UDP + H(+). The protein operates within cell wall biogenesis; peptidoglycan biosynthesis. Functionally, cell wall formation. Catalyzes the transfer of a GlcNAc subunit on undecaprenyl-pyrophosphoryl-MurNAc-pentapeptide (lipid intermediate I) to form undecaprenyl-pyrophosphoryl-MurNAc-(pentapeptide)GlcNAc (lipid intermediate II). The sequence is that of UDP-N-acetylglucosamine--N-acetylmuramyl-(pentapeptide) pyrophosphoryl-undecaprenol N-acetylglucosamine transferase from Anaplasma marginale (strain St. Maries).